Consider the following 390-residue polypeptide: MAMAAAVIVPLGILFFISGLVVNLLQAVCYVLVRPMSKNTYRKINRVVAETLWLELVWIVDWWAGVKIQVFADDETFNRMGKEHALVVCNHRSDIDWLVGWILAQRSGCLGSALAVMKKSSKFLPVIGWSMWFSEYLFLERNWAKDESTLQSGLQRLNDFPRPFWLALFVEGTRFTEAKLKAAQEYAASSELPVPRNVLIPRTKGFVSAVSNMRSFVPAIYDMTVAIPKTSPPPTMLRLFKGQPSVVHVHIKCHSMKDLPEPEDEIAQWCRDQFVAKDALLDKHIAADTFPGQKEQNIGRPIKSLAVVVSWACLLTLGAMKFLHWSNLFSSWKGIALSAFGLGIITLCMQILIRSSQSERSTPAKVAPAKPKDNHQSGPSSQTEVEEKQK.

Residues 2–22 (AMAAAVIVPLGILFFISGLVV) form a helical membrane-spanning segment. The HXXXXD motif motif lies at 91 to 96 (HRSDID). A run of 2 helical transmembrane segments spans residues 305-325 (LAVV…FLHW) and 333-353 (KGIA…QILI). The segment at 358-390 (SERSTPAKVAPAKPKDNHQSGPSSQTEVEEKQK) is disordered.

The protein belongs to the 1-acyl-sn-glycerol-3-phosphate acyltransferase family.

Its subcellular location is the endoplasmic reticulum membrane. It catalyses the reaction a 1-acyl-sn-glycero-3-phosphate + an acyl-CoA = a 1,2-diacyl-sn-glycero-3-phosphate + CoA. It participates in phospholipid metabolism; CDP-diacylglycerol biosynthesis; CDP-diacylglycerol from sn-glycerol 3-phosphate: step 2/3. Converts lysophosphatidic acid (LPA) into phosphatidic acid by incorporating acyl moiety at the 2 position. The protein is 1-acyl-sn-glycerol-3-phosphate acyltransferase 2 (LPAT2) of Brassica napus (Rape).